The sequence spans 392 residues: MTRFLLCSFALVLLYPSGIDMYLVGLPRIAQDLGASEAQLHIAFSVYLAGMASAMLFAGRIADRSGRKPVAIVGAVIFVVASLLCAQAHASSHFLVGRFIQGIGAGSCYVVAFAILRDTLDDRRRAKVLSLLNGITCIIPVLAPVLGHLIMLKYPWQSLFYTMTGMGVMVGLLSVFILRETRPTAHPQTATPQHGGSESLLNRFFLSRILITTLSVTAILTYVNVSPVLMMEEMGFDRGTYSMAMALMAMISMAVSFSTPFALSLFTPRTLMLTSQVLFLAAGLALSLATRQTLTLIGLGMICAGFSVGFGVAMSQALGPFTLRAGVASSVLGIAQVCGSSLWIWLAAIIGLSAMNMLIGILIACSIVSLVLLLVVTPPRVAQYDEEAAVES.

Transmembrane regions (helical) follow at residues 4–24 (FLLCSFALVLLYPSGIDMYLV), 38–58 (AQLHIAFSVYLAGMASAMLFA), 70–90 (VAIVGAVIFVVASLLCAQAHA), 95–115 (LVGRFIQGIGAGSCYVVAFAI), 131–151 (LLNGITCIIPVLAPVLGHLIM), 158–178 (SLFYTMTGMGVMVGLLSVFIL), 209–229 (ILITTLSVTAILTYVNVSPVL), 246–266 (ALMAMISMAVSFSTPFALSLF), 270–290 (TLMLTSQVLFLAAGLALSLAT), 294–314 (LTLIGLGMICAGFSVGFGVAM), 331–351 (VLGIAQVCGSSLWIWLAAIIG), and 357–377 (MLIGILIACSIVSLVLLLVVT).

This sequence belongs to the major facilitator superfamily. DHA1 family. MdtL (TC 2.A.1.2.22) subfamily.

It localises to the cell inner membrane. The polypeptide is Multidrug resistance protein MdtL (Klebsiella pneumoniae (strain 342)).